A 66-amino-acid polypeptide reads, in one-letter code: Large ribosomal subunit protein bL31 (66 aa).

Cys-16, Cys-18, Cys-36, and Cys-39 together coordinate Zn(2+).

This sequence belongs to the bacterial ribosomal protein bL31 family. Type A subfamily. As to quaternary structure, part of the 50S ribosomal subunit. Requires Zn(2+) as cofactor.

Functionally, binds the 23S rRNA. This is Large ribosomal subunit protein bL31 from Trichlorobacter lovleyi (strain ATCC BAA-1151 / DSM 17278 / SZ) (Geobacter lovleyi).